The primary structure comprises 473 residues: MTRGRVIQVMGPVVDVKFENGHLPAIYNALKIQHKARNENEVDIDLTLEVALHLGDDTVRTIAMASTDGLIRGMEVIDTGAPISVPVGEVTLGRVFNVLGEPIDLEGDIPADARRDPIHRPAPKFEELATEVEILETGIKVVDLLAPYIKGGKIGLFGGAGVGKTVLIQELIHNIAQEHGGISVFAGVGERTREGNDLYHEMKDSGVISKTAMVFGQMNEPPGARMRVALTGLTMAEYFRDEQGQDVLLFIDNIFRFTQAGSEVSALLGRMPSAVGYQPTLATEMGQLQERITSTAKGSTTSIQAIYVPADDYTDPAPATTFSHLDATTNLERNVAEMGIYPAVDPLASTSRALAPEIVGEEHYQVARKVQQTLQRYKELQDIIAILGMDELSDEDKLVVHRARRIQFFLSQNFHVAEQFTGQPGSYVPVKETVRGFKEILEGKYDHLPEDRFRLVGRIEEVVEKAKAMGVEV.

Gly-158–Thr-165 contacts ATP.

Belongs to the ATPase alpha/beta chains family. As to quaternary structure, F-type ATPases have 2 components, CF(1) - the catalytic core - and CF(0) - the membrane proton channel. CF(1) has five subunits: alpha(3), beta(3), gamma(1), delta(1), epsilon(1). CF(0) has three main subunits: a(1), b(2) and c(9-12). The alpha and beta chains form an alternating ring which encloses part of the gamma chain. CF(1) is attached to CF(0) by a central stalk formed by the gamma and epsilon chains, while a peripheral stalk is formed by the delta and b chains.

It is found in the cell membrane. The enzyme catalyses ATP + H2O + 4 H(+)(in) = ADP + phosphate + 5 H(+)(out). Produces ATP from ADP in the presence of a proton gradient across the membrane. The catalytic sites are hosted primarily by the beta subunits. The chain is ATP synthase subunit beta from Bacillus caldotenax.